A 198-amino-acid chain; its full sequence is Putative 3-methyladenine DNA glycosylase (198 aa).

This sequence belongs to the DNA glycosylase MPG family.

This chain is Putative 3-methyladenine DNA glycosylase, found in Rhizobium johnstonii (strain DSM 114642 / LMG 32736 / 3841) (Rhizobium leguminosarum bv. viciae).